The chain runs to 324 residues: Tyrosine--tRNA ligase (324 aa).

Tyrosine 36 contributes to the L-tyrosine binding site. The short motif at 41–49 (PSGKVHLGH) is the 'HIGH' region element. Positions 158, 162, 165, and 180 each coordinate L-tyrosine. The 'KMSKS' region motif lies at 215-219 (KMSSS). Serine 218 contributes to the ATP binding site.

This sequence belongs to the class-I aminoacyl-tRNA synthetase family. TyrS type 3 subfamily. As to quaternary structure, homodimer.

It is found in the cytoplasm. The catalysed reaction is tRNA(Tyr) + L-tyrosine + ATP = L-tyrosyl-tRNA(Tyr) + AMP + diphosphate + H(+). Catalyzes the attachment of tyrosine to tRNA(Tyr) in a two-step reaction: tyrosine is first activated by ATP to form Tyr-AMP and then transferred to the acceptor end of tRNA(Tyr). In Methanopyrus kandleri (strain AV19 / DSM 6324 / JCM 9639 / NBRC 100938), this protein is Tyrosine--tRNA ligase.